Here is a 235-residue protein sequence, read N- to C-terminus: Large ribosomal subunit protein uL1 (235 aa).

It belongs to the universal ribosomal protein uL1 family. As to quaternary structure, part of the 50S ribosomal subunit.

In terms of biological role, binds directly to 23S rRNA. The L1 stalk is quite mobile in the ribosome, and is involved in E site tRNA release. Functionally, protein L1 is also a translational repressor protein, it controls the translation of the L11 operon by binding to its mRNA. The chain is Large ribosomal subunit protein uL1 from Blochmanniella floridana.